The primary structure comprises 179 residues: 5'-deoxynucleotidase VV1_0013 (179 aa).

H53 lines the a divalent metal cation pocket. Residues 62-65 and D122 contribute to the substrate site; that span reads DLPT. An a divalent metal cation-binding site is contributed by D122.

This sequence belongs to the 5DNU family. As to quaternary structure, homodimer. Requires a divalent metal cation as cofactor.

It localises to the cytoplasm. The catalysed reaction is a 2'-deoxyribonucleoside 5'-phosphate + H2O = a 2'-deoxyribonucleoside + phosphate. Catalyzes the strictly specific dephosphorylation of 2'-deoxyribonucleoside 5'-monophosphates. The chain is 5'-deoxynucleotidase VV1_0013 from Vibrio vulnificus (strain CMCP6).